Consider the following 437-residue polypeptide: Glutamyl-tRNA reductase (437 aa).

Residues 49–52 (TCNR), serine 109, 114–116 (ETQ), and glutamine 120 contribute to the substrate site. Cysteine 50 functions as the Nucleophile in the catalytic mechanism. 189–194 (GAGEMS) lines the NADP(+) pocket.

Belongs to the glutamyl-tRNA reductase family. Homodimer.

It carries out the reaction (S)-4-amino-5-oxopentanoate + tRNA(Glu) + NADP(+) = L-glutamyl-tRNA(Glu) + NADPH + H(+). It functions in the pathway porphyrin-containing compound metabolism; protoporphyrin-IX biosynthesis; 5-aminolevulinate from L-glutamyl-tRNA(Glu): step 1/2. In terms of biological role, catalyzes the NADPH-dependent reduction of glutamyl-tRNA(Glu) to glutamate 1-semialdehyde (GSA). The polypeptide is Glutamyl-tRNA reductase (Listeria welshimeri serovar 6b (strain ATCC 35897 / DSM 20650 / CCUG 15529 / CIP 8149 / NCTC 11857 / SLCC 5334 / V8)).